The chain runs to 353 residues: DNA integrity scanning protein DisA (353 aa).

In terms of domain architecture, DAC spans Asp6–Ser144. ATP is bound by residues Gly73, Leu91, and Thr104–Thr108.

The protein belongs to the DisA family. In terms of assembly, homooctamer. Mg(2+) is required as a cofactor.

The catalysed reaction is 2 ATP = 3',3'-c-di-AMP + 2 diphosphate. In terms of biological role, participates in a DNA-damage check-point that is active prior to asymmetric division when DNA is damaged. DisA forms globular foci that rapidly scan along the chromosomes during sporulation, searching for lesions. When a lesion is present, DisA pauses at the lesion site. This triggers a cellular response that culminates in a temporary block in sporulation initiation. Functionally, also has diadenylate cyclase activity, catalyzing the condensation of 2 ATP molecules into cyclic di-AMP (c-di-AMP). c-di-AMP acts as a signaling molecule that couples DNA integrity with progression of sporulation. The rise in c-di-AMP level generated by DisA while scanning the chromosome, operates as a positive signal that advances sporulation; upon encountering a lesion, the DisA focus arrests at the damaged site and halts c-di-AMP synthesis. In Clostridium botulinum (strain Loch Maree / Type A3), this protein is DNA integrity scanning protein DisA.